The chain runs to 157 residues: Phosphopantetheine adenylyltransferase (157 aa).

Residue Thr10 coordinates substrate. Residues 10–11 (TF) and His18 contribute to the ATP site. 3 residues coordinate substrate: Lys42, Leu74, and Arg88. Residues 89–91 (GLR), Glu99, and 124–130 (NAFISSS) each bind ATP.

It belongs to the bacterial CoaD family. As to quaternary structure, homohexamer. The cofactor is Mg(2+).

Its subcellular location is the cytoplasm. It carries out the reaction (R)-4'-phosphopantetheine + ATP + H(+) = 3'-dephospho-CoA + diphosphate. It functions in the pathway cofactor biosynthesis; coenzyme A biosynthesis; CoA from (R)-pantothenate: step 4/5. Functionally, reversibly transfers an adenylyl group from ATP to 4'-phosphopantetheine, yielding dephospho-CoA (dPCoA) and pyrophosphate. The sequence is that of Phosphopantetheine adenylyltransferase from Helicobacter pylori (strain J99 / ATCC 700824) (Campylobacter pylori J99).